We begin with the raw amino-acid sequence, 651 residues long: Coiled-coil domain-containing protein 81 (651 aa).

The segment at 194-314 is disordered; that stretch reads LSSRESFGKR…PKTSPAPACQ (121 aa). At Ser206 the chain carries Phosphoserine. Basic and acidic residues-rich tracts occupy residues 212 to 222 and 232 to 250; these read RIEHKETENKP and GENRPRKSKLKDQSDKEEG. Residues 265–275 show a composition bias toward polar residues; that stretch reads SISPAKVTSGS. Ser273, Ser275, Ser294, and Ser416 each carry phosphoserine. 2 coiled-coil regions span residues 428–465 and 539–566; these read SQSLLKQMESKREKEIKQRQNRELMDRLEQVQLTEELA and KRNTILNQLVDQRRDLQMLQRTKREHLA.

It localises to the cytoplasm. Its subcellular location is the cytoskeleton. It is found in the microtubule organizing center. The protein resides in the centrosome. The chain is Coiled-coil domain-containing protein 81 (Ccdc81) from Rattus norvegicus (Rat).